The chain runs to 467 residues: Microtubule-associated tyrosine carboxypeptidase 1 (467 aa).

Residues 1-10 show a composition bias toward polar residues; it reads MVLDSGTQVY. Disordered regions lie at residues 1–40 and 77–111; these read MVLD…PLYP and MRRS…TLRP. Histidine 276 serves as a coordination point for Zn(2+). The active-site Nucleophile is glutamate 277. Residues histidine 281 and glutamate 312 each contribute to the Zn(2+) site.

Belongs to the peptidase MATCAP family. Requires Zn(2+) as cofactor.

The protein resides in the cytoplasm. The protein localises to the cytoskeleton. The catalysed reaction is C-terminal L-alpha-aminoacyl-L-glutamyl-L-glutamyl-L-tyrosyl-[tubulin] + H2O = C-terminal L-alpha-aminoacyl-L-glutamyl-L-glutamyl-[tubulin] + L-tyrosine. It carries out the reaction C-terminal L-alpha-aminoacyl-L-glutamyl-L-glutamyl-L-phenylalanyl-[tubulin] + H2O = C-terminal L-alpha-aminoacyl-L-glutamyl-L-glutamyl-[tubulin] + L-phenylalanine. Tyrosine carboxypeptidase that removes the C-terminal tyrosine residue of alpha-tubulin, thereby regulating microtubule dynamics and function. Also able to remove the C-terminal phenylalanine residue of alpha-tubulin TUBA8. Recognizes adjacent tubulin dimers along the same protofilament. The protein is Microtubule-associated tyrosine carboxypeptidase 1 of Mus musculus (Mouse).